The chain runs to 268 residues: Tryptophan synthase alpha chain (268 aa).

Active-site proton acceptor residues include Glu-49 and Asp-60.

The protein belongs to the TrpA family. In terms of assembly, tetramer of two alpha and two beta chains.

The enzyme catalyses (1S,2R)-1-C-(indol-3-yl)glycerol 3-phosphate + L-serine = D-glyceraldehyde 3-phosphate + L-tryptophan + H2O. It functions in the pathway amino-acid biosynthesis; L-tryptophan biosynthesis; L-tryptophan from chorismate: step 5/5. In terms of biological role, the alpha subunit is responsible for the aldol cleavage of indoleglycerol phosphate to indole and glyceraldehyde 3-phosphate. This is Tryptophan synthase alpha chain from Pseudomonas aeruginosa (strain UCBPP-PA14).